Reading from the N-terminus, the 315-residue chain is N-acetylneuraminate lyase (315 aa).

2 residues coordinate aceneuramate: S59 and S60. Y149 (proton donor) is an active-site residue. K177 (schiff-base intermediate with substrate) is an active-site residue. Residues S179, G202, D204, E205, and G221 each contribute to the aceneuramate site.

This sequence belongs to the DapA family. NanA subfamily. Homotetramer.

The protein resides in the cytoplasm. The catalysed reaction is aceneuramate = aldehydo-N-acetyl-D-mannosamine + pyruvate. The protein operates within amino-sugar metabolism; N-acetylneuraminate degradation; D-fructose 6-phosphate from N-acetylneuraminate: step 1/5. In terms of biological role, catalyzes the reversible aldol cleavage of N-acetylneuraminic acid (sialic acid; Neu5Ac) to form pyruvate and N-acetylmannosamine (ManNAc) via a Schiff base intermediate. Cannot use 2,7-anhydro-Neu5Ac. Involved in the degradation of sialic acid, which is present in the host mucus layer and represents a much-coveted source of nutrients for R.gnavus, a prevalent member of the normal gut microbiota. The sequence is that of N-acetylneuraminate lyase from Mediterraneibacter gnavus (strain ATCC 29149 / DSM 114966 / JCM 6515 / VPI C7-9) (Ruminococcus gnavus).